Reading from the N-terminus, the 383-residue chain is DNA-directed RNA polymerase subunit alpha (383 aa).

Positions 1–240 (MEKKTGLIQF…NLFHQISPPL (240 aa)) are alpha N-terminal domain (alpha-NTD). The interval 306–383 (IDKQMNDSVN…RFNMELLPTK (78 aa)) is alpha C-terminal domain (alpha-CTD).

It belongs to the RNA polymerase alpha chain family. In plastids the minimal PEP RNA polymerase catalytic core is composed of four subunits: alpha, beta, beta', and beta''. When a (nuclear-encoded) sigma factor is associated with the core the holoenzyme is formed, which can initiate transcription.

Its subcellular location is the plastid. The protein localises to the chloroplast. The catalysed reaction is RNA(n) + a ribonucleoside 5'-triphosphate = RNA(n+1) + diphosphate. DNA-dependent RNA polymerase catalyzes the transcription of DNA into RNA using the four ribonucleoside triphosphates as substrates. The polypeptide is DNA-directed RNA polymerase subunit alpha (Staurastrum punctulatum (Green alga)).